The following is a 233-amino-acid chain: 3-dehydroquinate dehydratase (233 aa).

3-dehydroquinate-binding positions include 39–41 (EIR) and Arg73. His132 serves as the catalytic Proton donor/acceptor. The Schiff-base intermediate with substrate role is filled by Lys159. 3-dehydroquinate contacts are provided by Arg196 and Gln219.

This sequence belongs to the type-I 3-dehydroquinase family. As to quaternary structure, homodimer.

It catalyses the reaction 3-dehydroquinate = 3-dehydroshikimate + H2O. Its pathway is metabolic intermediate biosynthesis; chorismate biosynthesis; chorismate from D-erythrose 4-phosphate and phosphoenolpyruvate: step 3/7. In terms of biological role, involved in the third step of the chorismate pathway, which leads to the biosynthesis of aromatic amino acids. Catalyzes the cis-dehydration of 3-dehydroquinate (DHQ) and introduces the first double bond of the aromatic ring to yield 3-dehydroshikimate. The sequence is that of 3-dehydroquinate dehydratase from Methanococcoides burtonii (strain DSM 6242 / NBRC 107633 / OCM 468 / ACE-M).